Reading from the N-terminus, the 496-residue chain is Bifunctional protein HldE (496 aa).

Residues 1–331 (MDPTPALAEI…AAVHQEEVSA (331 aa)) are ribokinase. Position 206–209 (206–209 (NRKE)) interacts with ATP. The active site involves Asp-276. The interval 358–496 (FTNGCFDLLH…GGSRRSGDTL (139 aa)) is cytidylyltransferase.

In the N-terminal section; belongs to the carbohydrate kinase PfkB family. It in the C-terminal section; belongs to the cytidylyltransferase family. As to quaternary structure, homodimer.

It catalyses the reaction D-glycero-beta-D-manno-heptose 7-phosphate + ATP = D-glycero-beta-D-manno-heptose 1,7-bisphosphate + ADP + H(+). It carries out the reaction D-glycero-beta-D-manno-heptose 1-phosphate + ATP + H(+) = ADP-D-glycero-beta-D-manno-heptose + diphosphate. The protein operates within nucleotide-sugar biosynthesis; ADP-L-glycero-beta-D-manno-heptose biosynthesis; ADP-L-glycero-beta-D-manno-heptose from D-glycero-beta-D-manno-heptose 7-phosphate: step 1/4. It functions in the pathway nucleotide-sugar biosynthesis; ADP-L-glycero-beta-D-manno-heptose biosynthesis; ADP-L-glycero-beta-D-manno-heptose from D-glycero-beta-D-manno-heptose 7-phosphate: step 3/4. Catalyzes the phosphorylation of D-glycero-D-manno-heptose 7-phosphate at the C-1 position to selectively form D-glycero-beta-D-manno-heptose-1,7-bisphosphate. Functionally, catalyzes the ADP transfer from ATP to D-glycero-beta-D-manno-heptose 1-phosphate, yielding ADP-D-glycero-beta-D-manno-heptose. This is Bifunctional protein HldE from Rhodospirillum rubrum (strain ATCC 11170 / ATH 1.1.1 / DSM 467 / LMG 4362 / NCIMB 8255 / S1).